Consider the following 468-residue polypeptide: MAAPDLSTNLQEEATCAICLDYFTDPVMTDCGHNFCRECIRRCWGQPEGPYACPECRELFPQRNLRPNRPLAKMAEMARRLHPPSPVPQGVCAAHREPLAAFCGDELRLLCAACERSGEHWAHRVRPLQDAAEDLKSKLEKSLEHLRKQMEDALLFQAQAEETCSLWQKMVETQRQNVLTEFERLRRLLVEEEQLLLQRLEEEELEVLPPLRESAARLGQQSAQLAELITELEGRCQLPALGLLQDIRDTLRRVQDVKLQPPEVVPMEMRTVCRVPGLVEALRRFRGDMTLDPDTANPELVLSEDRRSVRRGDLRQALPDSPERFDPGPCVLGREPLTSGRHYWEVEVGERASWALGVCRENANRKEKGELFAGNGFWILVFLGSYYNSSERAFAPLRDPPRRVGIFLDYEAGHLSFYSANDGSLLYTFPETPFSGTLRALFSPLSSSPTPMTICRLKGGPGDGLAPQ.

The segment at 16 to 57 (CAICLDYFTDPVMTDCGHNFCRECIRRCWGQPEGPYACPECR) adopts an RING-type zinc-finger fold. At serine 85 the chain carries Phosphoserine. The B box-type zinc-finger motif lies at 87-128 (VPQGVCAAHREPLAAFCGDELRLLCAACERSGEHWAHRVRPL). Cysteine 92, histidine 95, cysteine 114, and histidine 120 together coordinate Zn(2+). Residues 128-233 (LQDAAEDLKS…QLAELITELE (106 aa)) adopt a coiled-coil conformation. Residues 268-461 (EMRTVCRVPG…MTICRLKGGP (194 aa)) form the B30.2/SPRY domain. A Glycyl lysine isopeptide (Lys-Gly) (interchain with G-Cter in ubiquitin) cross-link involves residue lysine 458.

It belongs to the TRIM/RBCC family. As to quaternary structure, binds cytoplasmic tail of integrin alpha-1. Interacts with the HN peptide. Interacts with PHOX2B. Interacts (when autoubiquitinated) with SQSTM1/p62; promoting AIM2 recruitment to autophagosomes. Interacts with AIM2; promoting its autophagy-dependent degradation. In terms of processing, autoubiquitinated upon DNA stimulation; autoubiquitination promotes interaction with SQSTM1/p62 and recruitment of AIM2 to autophagosomes.

Its subcellular location is the cytoplasm. The protein resides in the nucleus. It catalyses the reaction S-ubiquitinyl-[E2 ubiquitin-conjugating enzyme]-L-cysteine + [acceptor protein]-L-lysine = [E2 ubiquitin-conjugating enzyme]-L-cysteine + N(6)-ubiquitinyl-[acceptor protein]-L-lysine.. Its pathway is protein modification; protein ubiquitination. Functionally, E3 ubiquitin-protein ligase that promotes the degradation of insoluble ubiquitinated proteins, including insoluble PAX6, poly-Gln repeat expanded HTT and poly-Ala repeat expanded ARX. Mediates PAX6 ubiquitination leading to proteasomal degradation, thereby modulating cortical neurogenesis. May also inhibit PAX6 transcriptional activity, possibly in part by preventing the binding of PAX6 to its consensus sequences. May contribute to the regulation of the intracellular level of HN (humanin) or HN-containing proteins through the proteasomal degradation pathway. Mediates MED15 ubiquitination leading to proteasomal degradation. May contribute to the innate restriction of retroviruses. Upon overexpression, reduces HIV-1 and murine leukemia virus infectivity, by suppressing viral gene expression. Antiviral activity depends on a functional E3 ubiquitin-protein ligase domain. May regulate TRIM5 turnover via the proteasome pathway, thus counteracting the TRIM5-mediated cross-species restriction of retroviral infection at early stages of the retroviral life cycle. Acts as an inhibitor of the AIM2 inflammasome by promoting autophagy-dependent degradation of AIM2. Mechanistically, undergoes autoubiquitination upon DNA stimulation, promoting interaction with AIM2 and SQSTM1/p62, leading to AIM2 recruitment to autophagosomes. This is E3 ubiquitin-protein ligase TRIM11 (TRIM11) from Bos taurus (Bovine).